Here is a 327-residue protein sequence, read N- to C-terminus: MTNEVKENTPLLNAIGLKKYYPVKKGLFAKPQQVKALDGVSFQLERGKTLAVVGESGCGKSTLGRLLTMIEEPTKGELYYKGHNFLENDSETKALRRKKIQIVFQNPYASLNPRKKIGSILEEPLIINTKLSAKERREKVLSMMEKVGLRAEFYDRYPHMFSGGQRQRIAIARGLMLDPDVVVADEPVSALDVSVRAQVLNLMMDLQDELGLSYVFISHDLSVVEHIADEVMVMYLGRCIEKGTTEQIFSNPQHPYTKALLSATPRLSPNLRRERIKLTGELPSPINPPKGCAFNPRCWKATEKCRENQPHLEQHTDGKLIACFHID.

The region spanning Leu12–Leu261 is the ABC transporter domain. Gly54–Ser61 lines the ATP pocket.

Belongs to the ABC transporter superfamily.

The protein resides in the cell inner membrane. It carries out the reaction a dipeptide(out) + ATP + H2O = a dipeptide(in) + ADP + phosphate + H(+). In terms of biological role, part of the ABC transporter DppBCDF involved in dipeptide transport. Responsible for energy coupling to the transport system. The chain is Dipeptide transport ATP-binding protein DppF (dppF) from Haemophilus influenzae (strain ATCC 51907 / DSM 11121 / KW20 / Rd).